Reading from the N-terminus, the 401-residue chain is Membrane protein UL43 homolog (401 aa).

10 consecutive transmembrane segments (helical) span residues 43-63 (FVGIGLQACVLTSSILHIDLL), 67-87 (STCLILMIISMYVLSLIRVPI), 93-113 (IVTVCRSIQALATLVAASVWV), 124-144 (LIVVTVCILFVFIAGTQISLF), 159-179 (ASLLAIIGGCVLGVSVKLVEL), 182-202 (VPIGIGIAIAIIASCQDFGLA), 259-279 (PGVIFSPAVGTHATPIIWIVL), 294-314 (YVVFCLTVGHVSAMLLEQLVI), 332-352 (AVCMVLAAFGYGVAAPLSLAF), and 379-399 (ISRWLIVCVYVAAGLCYATII).

It belongs to the alphaherpesvirinae HHV-1 UL43 family.

The protein localises to the membrane. This chain is Membrane protein UL43 homolog, found in Equine herpesvirus 1 (strain Ab4p) (EHV-1).